Here is a 921-residue protein sequence, read N- to C-terminus: Protein translocase subunit SecA (921 aa).

ATP-binding positions include Q87, G105–T109, and D515. Positions D872 to R901 are disordered. Zn(2+) contacts are provided by C905, C907, C916, and C917.

This sequence belongs to the SecA family. Monomer and homodimer. Part of the essential Sec protein translocation apparatus which comprises SecA, SecYEG and auxiliary proteins SecDF-YajC and YidC. It depends on Zn(2+) as a cofactor.

The protein resides in the cell inner membrane. Its subcellular location is the cytoplasm. It catalyses the reaction ATP + H2O + cellular proteinSide 1 = ADP + phosphate + cellular proteinSide 2.. In terms of biological role, part of the Sec protein translocase complex. Interacts with the SecYEG preprotein conducting channel. Has a central role in coupling the hydrolysis of ATP to the transfer of proteins into and across the cell membrane, serving both as a receptor for the preprotein-SecB complex and as an ATP-driven molecular motor driving the stepwise translocation of polypeptide chains across the membrane. This is Protein translocase subunit SecA from Polynucleobacter asymbioticus (strain DSM 18221 / CIP 109841 / QLW-P1DMWA-1) (Polynucleobacter necessarius subsp. asymbioticus).